A 212-amino-acid chain; its full sequence is Pyrrolidone-carboxylate peptidase (212 aa).

Residues Glu78, Cys141, and His165 contribute to the active site.

Belongs to the peptidase C15 family. In terms of assembly, homotetramer.

The protein resides in the cytoplasm. It catalyses the reaction Release of an N-terminal pyroglutamyl group from a polypeptide, the second amino acid generally not being Pro.. In terms of biological role, removes 5-oxoproline from various penultimate amino acid residues except L-proline. The sequence is that of Pyrrolidone-carboxylate peptidase from Staphylococcus aureus (strain bovine RF122 / ET3-1).